The sequence spans 509 residues: MIILVAVVTAVISFGLGYVVAKSRIEQKNRKAQQDAVSLLKKAEQEAQEIKRKAIIEAREEVHKIKEEIEEEKKRRDLEHRSLEERLLKREEIISKREELVDKKETALEQLRVQLEAAKKKIEQREKELDERFTKLAGMTVEEARQIVIDEARQKYEHDLAILYKKIKENYEEEAEKEAKKIIATAVQRYAPEYIGEITVSTVSLPSDDMKGRIIGREGRNIRTFEKITGVDLIIDDTPEVVVLSSFNPIRREIARLTLEKLVTDGRIHPARIEEMYEKSKQEMEKMIKEAGQEATFVTGVTGLHPELIKLLGKLKFRTSYGQNVLDHSIEVAQLAALMAEELGLDVDRTRRGGLLHDIGKALDHEVEGSHTEIGAEIARRYGESDHIINMIMSHHGEQEPVCPESVLVAAADALSAARPGARRESLETYIRRLVKMEKIAMSFKNVEKAYAIQAGREVRVIVEPEKIDDVEADKMAYEIAKKIEEEVEYPGVLKVVVIREKRSIAYAK.

Residues 1 to 21 (MIILVAVVTAVISFGLGYVVA) form a helical membrane-spanning segment. The region spanning 199–259 (TVSTVSLPSD…IRREIARLTL (61 aa)) is the KH domain. The region spanning 325-418 (VLDHSIEVAQ…VAAADALSAA (94 aa)) is the HD domain.

It belongs to the RNase Y family.

The protein localises to the cell membrane. In terms of biological role, endoribonuclease that initiates mRNA decay. The sequence is that of Ribonuclease Y from Pseudothermotoga lettingae (strain ATCC BAA-301 / DSM 14385 / NBRC 107922 / TMO) (Thermotoga lettingae).